A 227-amino-acid chain; its full sequence is Protein FAM3C (227 aa).

The N-terminal stretch at 1 to 24 is a signal peptide; it reads MRVAGAAKLVVAVAVFLLTFYVIS. Disulfide bonds link Cys58–Cys86 and Cys64–Cys221. Residues 67-225 form the GG-type lectin domain; sequence KHFAFKMASG…VEMEGCIPQK (159 aa).

This sequence belongs to the FAM3 family.

It is found in the secreted. It localises to the cytoplasmic vesicle. Functionally, may be involved in retinal laminar formation. Promotes epithelial to mesenchymal transition. In Bos taurus (Bovine), this protein is Protein FAM3C (FAM3C).